The primary structure comprises 361 residues: Chitinase-3-like protein 1 (361 aa).

One can recognise a GH18 domain in the interval 1-361; it reads YKLICYYTSW…SAVKDVLAEV (361 aa). Cys5 and Cys30 are disulfide-bonded. Asn39 is a glycosylation site (N-linked (GlcNAc...) asparagine). Chitin contacts are provided by residues 49-50, 76-79, Tyr120, 183-186, and Arg241; these read EW, GGWN, and LTYD. The cysteines at positions 278 and 342 are disulfide-linked. The important for AKT1 activation and IL8 production stretch occupies residues 302 to 316; it reads QWVAYDDQESVKNKA. Trp330 contacts chitin. Asn345 carries N-linked (GlcNAc...) asparagine glycosylation.

The protein belongs to the glycosyl hydrolase 18 family. Monomer. Detected in mammary gland.

Its subcellular location is the secreted. The protein resides in the extracellular space. It localises to the cytoplasm. The protein localises to the perinuclear region. It is found in the endoplasmic reticulum. In terms of biological role, carbohydrate-binding lectin with a preference for chitin. Has no chitinase activity. May play a role in tissue remodeling and in the capacity of cells to respond to and cope with changes in their environment. Plays a role in T-helper cell type 2 (Th2) inflammatory response and IL-13-induced inflammation, regulating allergen sensitization, inflammatory cell apoptosis, dendritic cell accumulation and M2 macrophage differentiation. Facilitates invasion of pathogenic enteric bacteria into colonic mucosa and lymphoid organs. Mediates activation of AKT1 signaling pathway and subsequent IL8 production in colonic epithelial cells. Regulates antibacterial responses in lung by contributing to macrophage bacterial killing, controlling bacterial dissemination and augmenting host tolerance. Also regulates hyperoxia-induced injury, inflammation and epithelial apoptosis in lung. The protein is Chitinase-3-like protein 1 (CHI3L1) of Ovis aries (Sheep).